We begin with the raw amino-acid sequence, 255 residues long: Large ribosomal subunit protein uL4 (255 aa).

Belongs to the universal ribosomal protein uL4 family. In terms of assembly, part of the 50S ribosomal subunit.

In terms of biological role, one of the primary rRNA binding proteins, this protein initially binds near the 5'-end of the 23S rRNA. It is important during the early stages of 50S assembly. It makes multiple contacts with different domains of the 23S rRNA in the assembled 50S subunit and ribosome. Its function is as follows. Forms part of the polypeptide exit tunnel. The polypeptide is Large ribosomal subunit protein uL4 (Pyrococcus furiosus (strain ATCC 43587 / DSM 3638 / JCM 8422 / Vc1)).